Consider the following 194-residue polypeptide: Mpv17-like protein (194 aa).

Residues 1–14 (MASWWRAFPQAARR) are Cytoplasmic-facing. Residues 15–34 (YPWPTNVLLYAGLFSAGDAL) traverse the membrane as a helical segment. A targeting to peroxisomes region spans residues 16–55 (PWPTNVLLYAGLFSAGDALQQRLRGGPADWRQTRRVATLA). At 35 to 50 (QQRLRGGPADWRQTRR) the chain is on the lumenal side. Residues 51–67 (VATLAVTFHGNFNYVWL) traverse the membrane as a helical segment. The Cytoplasmic segment spans residues 68–91 (RLLERALPGRAPRTVLAKVLCDQT). A helical transmembrane segment spans residues 92–110 (VGGPIALSAFYVGMSVLQG). Over 111–150 (KDDIFLDLKQKFWNTYKSGLMYWPFVQLTNFSLVPVHWRT) the chain is Lumenal. Residues 151–168 (AYTGLCAFLWATFLCFSQ) form a helical membrane-spanning segment. At 169–194 (QSGDGTLQSIFIFLRRKEASDKSPEK) the chain is on the cytoplasmic side.

Belongs to the peroxisomal membrane protein PXMP2/4 family. Isoform 1 and isoform 3 are expressed in the kidney (at protein level). Isoform 1 is expressed in the kidney, spleen, heart, brain, lung and liver. Isoform 3 is expressed in the kidney. Isoform 1 and isoform 3 expression increase during development, reache their highest level in adulthood and decrease with aging.

The protein localises to the peroxisome membrane. Its subcellular location is the cytoplasm. Functionally, participates in reactive oxygen species metabolism by up- or down-regulation of the genes of antioxidant enzymes. Protective against the mitochondrial apoptotic cascade. Participates in reactive oxygen species metabolism by up- or down-regulation of the genes of antioxidant enzymes. This is Mpv17-like protein (Mpv17l) from Mus musculus (Mouse).